We begin with the raw amino-acid sequence, 581 residues long: La-related protein 7 (581 aa).

Residue methionine 1 is modified to N-acetylmethionine. A compositionally biased stretch (polar residues) spans methionine 1–asparagine 10. 3 disordered regions span residues methionine 1–arginine 28, asparagine 188–lysine 368, and lysine 410–glutamine 440. The 95-residue stretch at arginine 28–glutamate 122 folds into the HTH La-type RNA-binding domain. The 79-residue stretch at arginine 125 to threonine 203 folds into the RRM domain. Residues lysine 219–methionine 228 are compositionally biased toward basic residues. Residues lysine 229 to asparagine 240 are compositionally biased toward basic and acidic residues. Lysine 237 is covalently cross-linked (Glycyl lysine isopeptide (Lys-Gly) (interchain with G-Cter in SUMO2)). Threonine 257 bears the Phosphothreonine mark. Phosphoserine is present on residues serine 258, serine 261, serine 273, serine 298, serine 299, and serine 300. Residues isoleucine 316–glutamate 335 show a composition bias toward basic and acidic residues. Serine 337 is modified (phosphoserine). Threonine 338 is modified (phosphothreonine). A Phosphoserine modification is found at serine 351. The span at lysine 354–histidine 367 shows a compositional bias: basic residues. A Glycyl lysine isopeptide (Lys-Gly) (interchain with G-Cter in SUMO2) cross-link involves residue lysine 410. One can recognise a xRRM domain in the interval glutamine 449–lysine 562.

It belongs to the LARP7 family. In terms of assembly, core component of the 7SK RNP complex, at least composed of 7SK RNA, LARP7, MEPCE, HEXIM1 (or HEXIM2) and P-TEFb (composed of CDK9 and CCNT1/cyclin-T1). Interacts with METTL16. Interacts with RBM7; upon genotoxic stress this interaction is enhanced, triggering the release of inactive P-TEFb complex from the core, yielding to P-TEFb complex activation. Associates with box C/D small nucleolar ribonucleoprotein (snoRNP) complexes.

It is found in the nucleus. Its subcellular location is the nucleoplasm. In terms of biological role, RNA-binding protein that specifically binds distinct small nuclear RNA (snRNAs) and regulates their processing and function. Specifically binds the 7SK snRNA (7SK RNA) and acts as a core component of the 7SK ribonucleoprotein (RNP) complex, thereby acting as a negative regulator of transcription elongation by RNA polymerase II. The 7SK RNP complex sequesters the positive transcription elongation factor b (P-TEFb) in a large inactive 7SK RNP complex preventing RNA polymerase II phosphorylation and subsequent transcriptional elongation. The 7SK RNP complex also promotes snRNA gene transcription by RNA polymerase II via interaction with the little elongation complex (LEC). LARP7 specifically binds to the highly conserved 3'-terminal U-rich stretch of 7SK RNA; on stimulation, remains associated with 7SK RNA, whereas P-TEFb is released from the complex. LARP7 also acts as a regulator of mRNA splicing fidelity by promoting U6 snRNA processing. Specifically binds U6 snRNAs and associates with a subset of box C/D RNP complexes: promotes U6 snRNA 2'-O-methylation by facilitating U6 snRNA loading into box C/D RNP complexes. U6 snRNA 2'-O-methylation is required for mRNA splicing fidelity. Binds U6 snRNAs with a 5'-CAGGG-3' sequence motif. U6 snRNA processing is required for spermatogenesis. This chain is La-related protein 7, found in Macaca fascicularis (Crab-eating macaque).